Reading from the N-terminus, the 250-residue chain is Proteasome subunit alpha type-4 (250 aa).

The protein belongs to the peptidase T1A family. In terms of assembly, the 26S proteasome consists of a 20S proteasome core and two 19S regulatory subunits. The 20S proteasome core is composed of 28 subunits that are arranged in four stacked rings, resulting in a barrel-shaped structure. The two end rings are each formed by seven alpha subunits, and the two central rings are each formed by seven beta subunits. The catalytic chamber with the active sites is on the inside of the barrel.

It localises to the cytoplasm. The protein resides in the nucleus. Its function is as follows. The proteasome is a multicatalytic proteinase complex which is characterized by its ability to cleave peptides with Arg, Phe, Tyr, Leu, and Glu adjacent to the leaving group at neutral or slightly basic pH. The proteasome has an ATP-dependent proteolytic activity. This Dictyostelium discoideum (Social amoeba) protein is Proteasome subunit alpha type-4 (psmA4).